The chain runs to 126 residues: DNA-directed RNA polymerase subunit omega (126 aa).

This sequence belongs to the RNA polymerase subunit omega family. The RNAP catalytic core consists of 2 alpha, 1 beta, 1 beta' and 1 omega subunit. When a sigma factor is associated with the core the holoenzyme is formed, which can initiate transcription.

The catalysed reaction is RNA(n) + a ribonucleoside 5'-triphosphate = RNA(n+1) + diphosphate. Promotes RNA polymerase assembly. Latches the N- and C-terminal regions of the beta' subunit thereby facilitating its interaction with the beta and alpha subunits. The protein is DNA-directed RNA polymerase subunit omega of Paramagnetospirillum magneticum (strain ATCC 700264 / AMB-1) (Magnetospirillum magneticum).